We begin with the raw amino-acid sequence, 358 residues long: Phenylalanine--tRNA ligase alpha subunit (358 aa).

Glu-262 lines the Mg(2+) pocket.

The protein belongs to the class-II aminoacyl-tRNA synthetase family. Phe-tRNA synthetase alpha subunit type 1 subfamily. Tetramer of two alpha and two beta subunits. Mg(2+) is required as a cofactor.

It localises to the cytoplasm. It catalyses the reaction tRNA(Phe) + L-phenylalanine + ATP = L-phenylalanyl-tRNA(Phe) + AMP + diphosphate + H(+). The sequence is that of Phenylalanine--tRNA ligase alpha subunit (pheS) from Streptomyces coelicolor (strain ATCC BAA-471 / A3(2) / M145).